Consider the following 206-residue polypeptide: Large ribosomal subunit protein uL4 (206 aa).

A disordered region spans residues 43-78; it reads ARSGNRKQKDREEVKHTTKKPWRQKGTGRARAGMSS. A compositionally biased stretch (basic and acidic residues) spans 49-58; that stretch reads KQKDREEVKH. Residues 59 to 70 are compositionally biased toward basic residues; sequence TTKKPWRQKGTG.

This sequence belongs to the universal ribosomal protein uL4 family. Part of the 50S ribosomal subunit.

Functionally, one of the primary rRNA binding proteins, this protein initially binds near the 5'-end of the 23S rRNA. It is important during the early stages of 50S assembly. It makes multiple contacts with different domains of the 23S rRNA in the assembled 50S subunit and ribosome. Its function is as follows. Forms part of the polypeptide exit tunnel. This is Large ribosomal subunit protein uL4 from Ralstonia pickettii (strain 12J).